A 113-amino-acid polypeptide reads, in one-letter code: uncharacterized protein (113 aa).

The segment at 66-85 (WSTPTTSSNTQNTQSSSDSY) is disordered. A compositionally biased stretch (low complexity) spans 67-85 (STPTTSSNTQNTQSSSDSY).

This is an uncharacterized protein from Escherichia coli (Bacteriophage T4).